A 759-amino-acid chain; its full sequence is Na(+)/H(+) exchanger beta (759 aa).

At 1-14 (MPAFSCAFPGCRRD) the chain is on the cytoplasmic side. Residues 15–34 (LLVIVLVVFVGIGLPIEASA) form a helical membrane-spanning segment. Topologically, residues 35–75 (PAYQSHGTEGSHLTNITNTKKAFPVLAVNYEHVRKPFEIAL) are extracellular. N-linked (GlcNAc...) asparagine glycosylation occurs at Asn49. Residues 76 to 95 (WILLALLMKLGFHLIPRLSA) traverse the membrane as a helical segment. The Cytoplasmic segment spans residues 96–97 (VV). The helical transmembrane segment at 98-117 (PESCLLIVVGLLVGGLIKVI) threads the bilayer. Topologically, residues 118–122 (GEEPP) are extracellular. Residues 123 to 142 (VLDSQLFFLCLLPPIILDAG) form a helical membrane-spanning segment. Topologically, residues 143–149 (YFLPIRP) are cytoplasmic. The helical transmembrane segment at 150–169 (FTENVGTILVFAVIGTLWNA) threads the bilayer. The Extracellular segment spans residues 170–195 (FFMGGLLYALCQIESVGLSGVDLLAC). A helical transmembrane segment spans residues 196 to 214 (LLFGSIVSAVDPVAVLAVF). The Cytoplasmic segment spans residues 215 to 225 (EEIHINELVHI). Residues 226–244 (LVFGESLLNDAVTVVLYNL) form a helical membrane-spanning segment. Over 245–261 (FEEFSKVGTVTVLDVFL) the chain is Extracellular. Residues 262–282 (GVVCFFVVSLGGVLVGAIYGF) form a helical membrane-spanning segment. The Cytoplasmic segment spans residues 283–311 (LAAFTSRFTSHTRVIEPLFVFLYSYMAYL). A helical transmembrane segment spans residues 312–330 (SSEMFHLSGIMALIACGVV). At 331-352 (MRPYVEANISHKSYTTIKYFLK) the chain is on the extracellular side. Asn338 is a glycosylation site (N-linked (GlcNAc...) asparagine). Residues 353-372 (MWSSVSETLIFIFLGVSTVA) traverse the membrane as a helical segment. Residues 373 to 376 (GPHA) are Cytoplasmic-facing. Residues 377–398 (WNWTFVITTVILCLVSRVLGVI) traverse the membrane as a helical segment. At 399 to 446 (GLTFIINKFRIVKLTKKDQFIVAYGGLRGAIAFSLGYLLSNSHQMRNL) the chain is on the extracellular side. The helical transmembrane segment at 447-467 (FLTAIITVIFFTVFVQGMTIR) threads the bilayer. Residues 468 to 759 (PLVELLAVKK…KEDDDPFMSC (292 aa)) are Cytoplasmic-facing. Ser641 and Ser648 each carry phosphoserine; by PKA. The tract at residues 681–759 (FPTVHFEQPS…KEDDDPFMSC (79 aa)) is disordered. Residues 707–719 (VPKRPSLKADIEG) are compositionally biased toward basic and acidic residues.

This sequence belongs to the monovalent cation:proton antiporter 1 (CPA1) transporter (TC 2.A.36) family. Post-translationally, activated by cAMP, protein kinase A and protein kinase C.

It localises to the basolateral cell membrane. Its function is as follows. Involved in pH regulation to eliminate acids generated by active metabolism or to counter adverse environmental conditions. Major proton extruding system driven by the inward sodium ion chemical gradient. The chain is Na(+)/H(+) exchanger beta from Oncorhynchus mykiss (Rainbow trout).